Reading from the N-terminus, the 282-residue chain is MPLNVTVEEETLQIVEEEPQQEITNTILEEDFNLLDNSFQTDISSTSSQNDSKFTCLLVRHAESEHNVRGIRAGARIDSELTVHGYNQAKKLAKSIRNLDIVCVYSSPQKRAKRTAEEITKVANCPLYISDFLMEKDLGSLEGTSFRYTANYRPREPPMKVTNLESRDSLLTRARGFTDILFNEAIGFEGESGKTIVVVSHGIFLPFLLRAILARARTPLPSMIIPWNNASYCLITIDLGGNSIVKMNCNSHLRGIKRTRKLGSSTYDSKQKPITEFCSKLN.

His-61 functions as the Tele-phosphohistidine intermediate in the catalytic mechanism. Glu-135 functions as the Proton donor/acceptor in the catalytic mechanism.

Belongs to the phosphoglycerate mutase family. BPG-dependent PGAM subfamily.

Its subcellular location is the nucleus. This chain is Probable phosphatase C1620.13, found in Schizosaccharomyces pombe (strain 972 / ATCC 24843) (Fission yeast).